A 469-amino-acid polypeptide reads, in one-letter code: Acetyl-CoA decarbonylase/synthase complex subunit beta 1 (469 aa).

Residues C189, C192, C278, and C280 each coordinate [Ni-Fe-S] cluster.

This sequence belongs to the CdhC family. In terms of assembly, monomer. The ACDS complex is made up of alpha, epsilon, beta, gamma and delta chains with a probable stoichiometry of (alpha(2)epsilon(2))(4)-beta(8)-(gamma(1)delta(1))(8) (Potential). Requires [Ni-Fe-S] cluster as cofactor.

It catalyses the reaction Co(I)-[corrinoid Fe-S protein] + acetyl-CoA + H(+) = methyl-Co(III)-[corrinoid Fe-S protein] + CO + CoA. It functions in the pathway one-carbon metabolism; methanogenesis from acetate. In terms of biological role, part of a complex that catalyzes the reversible cleavage of acetyl-CoA, allowing growth on acetate as sole source of carbon and energy. The alpha-epsilon complex generates CO from CO(2), while the beta subunit (this protein) combines the CO with CoA and a methyl group to form acetyl-CoA. The methyl group, which is incorporated into acetyl-CoA, is transferred to the beta subunit by a corrinoid iron-sulfur protein (the gamma-delta complex). In Methanosarcina acetivorans (strain ATCC 35395 / DSM 2834 / JCM 12185 / C2A), this protein is Acetyl-CoA decarbonylase/synthase complex subunit beta 1 (cdhC1).